Consider the following 85-residue polypeptide: Conotoxin Cap15b (85 aa).

The signal sequence occupies residues 1 to 23 (MEKLTFLILVATVLLTIHVLVQS). A propeptide spanning residues 24–49 (DGDKHLKRRPKQYATKRLSALMRGHR) is cleaved from the precursor. Position 50 is a pyrrolidone carboxylic acid (Gln-50).

The protein belongs to the conotoxin O2 superfamily. Post-translationally, contains 4 disulfide bonds. Expressed by the venom duct.

Its subcellular location is the secreted. The protein is Conotoxin Cap15b of Conus capitaneus (Captain cone).